We begin with the raw amino-acid sequence, 326 residues long: NAD kinase (326 aa).

The Proton acceptor role is filled by Asp93. NAD(+) contacts are provided by residues 93 to 94 (DG), Arg98, 171 to 172 (NE), Arg182, Asp201, and 212 to 217 (TAHAFS).

This sequence belongs to the NAD kinase family. A divalent metal cation is required as a cofactor.

The protein resides in the cytoplasm. The enzyme catalyses NAD(+) + ATP = ADP + NADP(+) + H(+). Its function is as follows. Involved in the regulation of the intracellular balance of NAD and NADP, and is a key enzyme in the biosynthesis of NADP. Catalyzes specifically the phosphorylation on 2'-hydroxyl of the adenosine moiety of NAD to yield NADP. This is NAD kinase from Thermobifida fusca (strain YX).